Here is a 200-residue protein sequence, read N- to C-terminus: Small ribosomal subunit protein uS4c (200 aa).

The tract at residues 20–42 (GLTRKTTTRTSRPGQHGTQARKP) is disordered. The span at 23-37 (RKTTTRTSRPGQHGT) shows a compositional bias: polar residues. The S4 RNA-binding domain maps to 90-152 (MRLDNVIFRL…PKSQSIVKNY (63 aa)).

Belongs to the universal ribosomal protein uS4 family. As to quaternary structure, part of the 30S ribosomal subunit. Contacts protein S5. The interaction surface between S4 and S5 is involved in control of translational fidelity.

It is found in the plastid. The protein localises to the chloroplast. Its function is as follows. One of the primary rRNA binding proteins, it binds directly to 16S rRNA where it nucleates assembly of the body of the 30S subunit. With S5 and S12 plays an important role in translational accuracy. This is Small ribosomal subunit protein uS4c (rps4) from Guillardia theta (Cryptophyte).